A 272-amino-acid polypeptide reads, in one-letter code: Cell division protein ZipA (272 aa).

Topologically, residues 1–4 (METH) are periplasmic. The chain crosses the membrane as a helical span at residues 5–25 (ILFFILAGLLIAVLIGYSIWS). Topologically, residues 26–272 (ARREKSRIFS…RQNYLLRVAN (247 aa)) are cytoplasmic.

This sequence belongs to the ZipA family. As to quaternary structure, interacts with FtsZ via their C-terminal domains.

The protein localises to the cell inner membrane. Its function is as follows. Essential cell division protein that stabilizes the FtsZ protofilaments by cross-linking them and that serves as a cytoplasmic membrane anchor for the Z ring. Also required for the recruitment to the septal ring of downstream cell division proteins. The chain is Cell division protein ZipA from Glaesserella parasuis serovar 5 (strain SH0165) (Haemophilus parasuis).